The following is a 962-amino-acid chain: Glycine dehydrogenase (decarboxylating) (962 aa).

Residue lysine 709 is modified to N6-(pyridoxal phosphate)lysine.

It belongs to the GcvP family. As to quaternary structure, the glycine cleavage system is composed of four proteins: P, T, L and H. It depends on pyridoxal 5'-phosphate as a cofactor.

The catalysed reaction is N(6)-[(R)-lipoyl]-L-lysyl-[glycine-cleavage complex H protein] + glycine + H(+) = N(6)-[(R)-S(8)-aminomethyldihydrolipoyl]-L-lysyl-[glycine-cleavage complex H protein] + CO2. In terms of biological role, the glycine cleavage system catalyzes the degradation of glycine. The P protein binds the alpha-amino group of glycine through its pyridoxal phosphate cofactor; CO(2) is released and the remaining methylamine moiety is then transferred to the lipoamide cofactor of the H protein. The chain is Glycine dehydrogenase (decarboxylating) from Shewanella putrefaciens (strain CN-32 / ATCC BAA-453).